The primary structure comprises 187 residues: Elongation factor P (187 aa).

The protein belongs to the elongation factor P family.

Its subcellular location is the cytoplasm. It participates in protein biosynthesis; polypeptide chain elongation. In terms of biological role, involved in peptide bond synthesis. Stimulates efficient translation and peptide-bond synthesis on native or reconstituted 70S ribosomes in vitro. Probably functions indirectly by altering the affinity of the ribosome for aminoacyl-tRNA, thus increasing their reactivity as acceptors for peptidyl transferase. This is Elongation factor P from Frankia casuarinae (strain DSM 45818 / CECT 9043 / HFP020203 / CcI3).